Reading from the N-terminus, the 87-residue chain is U15-lycotoxin-Ls1h (87 aa).

The N-terminal stretch at 1 to 20 is a signal peptide; sequence MNSKIFAVLLLLGLLSCVLS. A WAP domain is found at 21-66; that stretch reads DQYCPKSSITACKKMNTRNDCCKDDDCTGGSWCCATPCGNFCKYPT. Disulfide bonds link cysteine 24–cysteine 54, cysteine 32–cysteine 58, cysteine 41–cysteine 53, cysteine 42–cysteine 80, and cysteine 47–cysteine 62.

The protein belongs to the venom protein 11 family. 01 (wap-1) subfamily. Contains 5 disulfide bonds. Expressed by the venom gland.

The protein resides in the secreted. Functionally, has antibacterial activity. This Lycosa singoriensis (Wolf spider) protein is U15-lycotoxin-Ls1h.